We begin with the raw amino-acid sequence, 213 residues long: Uracil phosphoribosyltransferase (213 aa).

5-phospho-alpha-D-ribose 1-diphosphate contacts are provided by residues Arg78, Arg103, and 130–138 (DPMLATGGS). Uracil is bound by residues Ile197 and 202–204 (GDA). Asp203 contributes to the 5-phospho-alpha-D-ribose 1-diphosphate binding site.

It belongs to the UPRTase family. It depends on Mg(2+) as a cofactor.

The catalysed reaction is UMP + diphosphate = 5-phospho-alpha-D-ribose 1-diphosphate + uracil. It functions in the pathway pyrimidine metabolism; UMP biosynthesis via salvage pathway; UMP from uracil: step 1/1. Its activity is regulated as follows. Allosterically activated by GTP. In terms of biological role, catalyzes the conversion of uracil and 5-phospho-alpha-D-ribose 1-diphosphate (PRPP) to UMP and diphosphate. The chain is Uracil phosphoribosyltransferase from Cutibacterium acnes (strain DSM 16379 / KPA171202) (Propionibacterium acnes).